The primary structure comprises 313 residues: Ribosomal RNA small subunit methyltransferase H (313 aa).

Residues 35-37 (GGH), Asp55, Phe79, Asp100, and Gln107 each bind S-adenosyl-L-methionine.

This sequence belongs to the methyltransferase superfamily. RsmH family.

Its subcellular location is the cytoplasm. The catalysed reaction is cytidine(1402) in 16S rRNA + S-adenosyl-L-methionine = N(4)-methylcytidine(1402) in 16S rRNA + S-adenosyl-L-homocysteine + H(+). Functionally, specifically methylates the N4 position of cytidine in position 1402 (C1402) of 16S rRNA. The chain is Ribosomal RNA small subunit methyltransferase H from Burkholderia ambifaria (strain MC40-6).